The following is a 121-amino-acid chain: Phosphoribosyl-AMP cyclohydrolase (121 aa).

Residue D74 participates in Mg(2+) binding. C75 serves as a coordination point for Zn(2+). Mg(2+) is bound by residues D76 and D78. Zn(2+) contacts are provided by C91 and C98.

Belongs to the PRA-CH family. As to quaternary structure, homodimer. Requires Mg(2+) as cofactor. Zn(2+) serves as cofactor.

The protein localises to the cytoplasm. It carries out the reaction 1-(5-phospho-beta-D-ribosyl)-5'-AMP + H2O = 1-(5-phospho-beta-D-ribosyl)-5-[(5-phospho-beta-D-ribosylamino)methylideneamino]imidazole-4-carboxamide. The protein operates within amino-acid biosynthesis; L-histidine biosynthesis; L-histidine from 5-phospho-alpha-D-ribose 1-diphosphate: step 3/9. Functionally, catalyzes the hydrolysis of the adenine ring of phosphoribosyl-AMP. This is Phosphoribosyl-AMP cyclohydrolase from Methanothrix thermoacetophila (strain DSM 6194 / JCM 14653 / NBRC 101360 / PT) (Methanosaeta thermophila).